Here is a 292-residue protein sequence, read N- to C-terminus: Formamidopyrimidine-DNA glycosylase (292 aa).

P2 serves as the catalytic Schiff-base intermediate with DNA. E3 functions as the Proton donor in the catalytic mechanism. Catalysis depends on K61, which acts as the Proton donor; for beta-elimination activity. DNA-binding residues include H96, R115, and K161. An FPG-type zinc finger spans residues 247–281 (SAYGQEDRPCPRCGTAIRREKFMNRSSFSCPKCQP). R271 functions as the Proton donor; for delta-elimination activity in the catalytic mechanism.

It belongs to the FPG family. In terms of assembly, monomer. Zn(2+) is required as a cofactor.

It carries out the reaction Hydrolysis of DNA containing ring-opened 7-methylguanine residues, releasing 2,6-diamino-4-hydroxy-5-(N-methyl)formamidopyrimidine.. The catalysed reaction is 2'-deoxyribonucleotide-(2'-deoxyribose 5'-phosphate)-2'-deoxyribonucleotide-DNA = a 3'-end 2'-deoxyribonucleotide-(2,3-dehydro-2,3-deoxyribose 5'-phosphate)-DNA + a 5'-end 5'-phospho-2'-deoxyribonucleoside-DNA + H(+). Involved in base excision repair of DNA damaged by oxidation or by mutagenic agents. Acts as a DNA glycosylase that recognizes and removes damaged bases. Has a preference for oxidized purines, such as 7,8-dihydro-8-oxoguanine (8-oxoG). Has AP (apurinic/apyrimidinic) lyase activity and introduces nicks in the DNA strand. Cleaves the DNA backbone by beta-delta elimination to generate a single-strand break at the site of the removed base with both 3'- and 5'-phosphates. The chain is Formamidopyrimidine-DNA glycosylase from Rhodococcus jostii (strain RHA1).